Here is a 168-residue protein sequence, read N- to C-terminus: Leukotoxin-activating lysine-acyltransferase LtxC (168 aa).

Residues His-23 and Asp-92 contribute to the active site.

The protein belongs to the RTX toxin acyltransferase family.

The protein localises to the cytoplasm. It carries out the reaction a fatty acyl-[ACP] + L-lysyl-[protein] = N(6)-(fatty acyl)-L-lysyl-[protein] + holo-[ACP] + H(+). Functionally, required for full activity and modification of the LtxA leukotoxin. Involved in fatty acid modification of the protoxin at two internal lysine residues, thereby converting it to the active toxin. This is Leukotoxin-activating lysine-acyltransferase LtxC from Aggregatibacter actinomycetemcomitans (Actinobacillus actinomycetemcomitans).